A 219-amino-acid polypeptide reads, in one-letter code: Leukocyte surface antigen CD53 (219 aa).

Topologically, residues 2–11 (GMSSLKLLKY) are cytoplasmic. A helical transmembrane segment spans residues 12-32 (VLFFFNFLFWVCGCCILGFGI). Over 33-54 (HLLVQNTYGILFRNLPFLTLGN) the chain is Extracellular. A helical transmembrane segment spans residues 55–69 (VLVIVGSIIMVVAFL). Topologically, residues 70-80 (GCMGSIKENKC) are cytoplasmic. A helical membrane pass occupies residues 81–106 (LLMSFFVLLLLILLAEVTLAILLFVY). Over 107-181 (EKKINTLVAE…KKGQAWFHSN (75 aa)) the chain is Extracellular. N-linked (GlcNAc...) asparagine glycans are attached at residues Asn119, Asn129, and Asn148. The chain crosses the membrane as a helical span at residues 182 to 206 (FLYIGIVTICVCVIQVLGMSFALTL). At 207–219 (NCQIDKTSQALGL) the chain is on the cytoplasmic side.

Belongs to the tetraspanin (TM4SF) family. Interacts with SCIMP. Interacts with CD45/PTPRC. Interacts with IL7R. Interacts with RBL2 and PPP2CA. In terms of tissue distribution, spleen and thymus, B-cells, monocytes, macrophages, neutrophils, single (CD4 or CD8) positive thymocytes, peripheral T-cells.

The protein localises to the cell membrane. It is found in the cell junction. It localises to the membrane. Its function is as follows. Required for efficient formation of myofibers in regenerating muscle at the level of cell fusion. May be involved in growth regulation in hematopoietic cells. The protein is Leukocyte surface antigen CD53 (Cd53) of Rattus norvegicus (Rat).